The primary structure comprises 333 residues: COMPASS-like H3K4 histone methylase component WDR5B (333 aa).

WD repeat units follow at residues 1 to 40 (MPSG…KTLE), 41 to 80 (GHTA…LIHR), 83 to 122 (GHSS…ECLK), 126 to 167 (GHTN…RMIK), 169 to 207 (HSMP…CLKT), 211 to 252 (DKSP…KVYT), 253 to 295 (GHTN…ILQR), and 298 to 333 (GHTD…KQDA).

Unlike WDR5A, does not interact with RBL or TRO.

In Arabidopsis thaliana (Mouse-ear cress), this protein is COMPASS-like H3K4 histone methylase component WDR5B.